Here is a 622-residue protein sequence, read N- to C-terminus: MTNSNFNHGNHGSNLPARLFTKQSQALIYNYKEAAVQRMLDFDNVSQRDTPSVGGLIHPGSDGGMYKAFFGFKELVIPVYNSVSEACQQCPNADVFLNFASHRSAYQSSLLALREPSIQTVVIIAEGVPENEARSLISIAKKLGKVIIGPATVGGIQAGCFKIGNTAGTIVYIMACKLYRSGSVGFVSKSGGLSNEMYNVLSRCTDGIYEGIAIGGDAFPGSTLTDHALRYEKLPEVQMIVILGELGGWDEYGIVEALKKGEITKPICAWVSGTVAKIFPTEVQFGHAGAKSGGETESADAKNKALREAGAVVPTSFEDFSNVIAATYAKLQSKGLVKPVEEPTPPELPLDFKTAVKAGKVRKPTSIISTICDDRGDELSYAGVPISEVCKEQYNMGDVIGLLWFKRKLPPYASKFFEMCLKLVADHGPCVSGAHNTIVAARAGKDLVSSLVSGLLTIGPRFGGAIDDSARVFQDAVDNNLQPSQFVEGMKSKGKRIPGIGHLIKSADEIDKRVVLLKDYAFTHFSSTKYLEYALEVEKYTLQKANNLILNVDGCIGVLFLDLLHSSGLFTQHEIKEIIDVGYLNGFFIVGRSVGLIGHALDQRRNKQGLYRHQADDVHYAL.

ATP is bound by residues 228–248 (ALRY…ELGG) and 279–305 (FPTE…KNKA). Residue E245 participates in Mg(2+) binding. Catalysis depends on H287, which acts as the Tele-phosphohistidine intermediate. 306 to 316 (LREAGAVVPTS) contributes to the CoA binding site.

This sequence in the N-terminal section; belongs to the succinate/malate CoA ligase beta subunit family. The protein in the C-terminal section; belongs to the succinate/malate CoA ligase alpha subunit family. In terms of assembly, homotetramer.

Its subcellular location is the cytoplasm. The catalysed reaction is oxaloacetate + acetyl-CoA + ADP + phosphate = citrate + ATP + CoA. Catalyzes the cleavage of citrate into oxaloacetate and acetyl-CoA, the latter serving as common substrate in multiple biochemical reactions in protein, carbohydrate and lipid metabolism. This is Probable ATP-citrate synthase (acly) from Dictyostelium discoideum (Social amoeba).